A 372-amino-acid polypeptide reads, in one-letter code: Maltose/maltodextrin import ATP-binding protein MalK (372 aa).

Residues 4-234 (VTLKNVCKAY…PQNRFVAGFI (231 aa)) form the ABC transporter domain. Residue 36–43 (GPSGCGKS) participates in ATP binding.

This sequence belongs to the ABC transporter superfamily. Maltooligosaccharide importer (TC 3.A.1.1.1) family. As to quaternary structure, the complex is composed of two ATP-binding proteins (MalK), two transmembrane proteins (MalG and MalK) and a solute-binding protein (MalE).

The protein resides in the cell inner membrane. It carries out the reaction D-maltose(out) + ATP + H2O = D-maltose(in) + ADP + phosphate + H(+). Its function is as follows. Part of the ABC transporter complex MalEFGK involved in maltose/maltodextrin import. Responsible for energy coupling to the transport system. The sequence is that of Maltose/maltodextrin import ATP-binding protein MalK from Vibrio parahaemolyticus serotype O3:K6 (strain RIMD 2210633).